A 79-amino-acid chain; its full sequence is uncharacterized protein (79 aa).

The first 33 residues, 1–33 (MRLSIRAIVLFALVWIGLLMSGYGVLVGSKVNA), serve as a signal peptide directing secretion.

This is an uncharacterized protein from Salmonella paratyphi A (strain ATCC 9150 / SARB42).